A 43-amino-acid chain; its full sequence is Neurotrophic factor BDNF (43 aa).

The protein belongs to the NGF-beta family.

The protein localises to the secreted. Its function is as follows. Promotes the survival of neuronal populations that are all located either in the central nervous system or directly connected to it. The protein is Neurotrophic factor BDNF (bdnf) of Raja clavata (Thornback ray).